The following is a 316-amino-acid chain: L-lactate dehydrogenase (316 aa).

NAD(+) is bound by residues Val15, Asp36, Arg41, Tyr66, and 80–81 (GA). Substrate-binding positions include Gln83, Arg90, and 122 to 125 (NPVD). NAD(+) contacts are provided by residues 120 to 122 (ATN) and Thr145. 150–153 (DTAR) is a binding site for substrate. 2 residues coordinate beta-D-fructose 1,6-bisphosphate: Arg155 and His170. The active-site Proton acceptor is the His177. A Phosphotyrosine modification is found at Tyr222. Thr231 provides a ligand contact to substrate. The disordered stretch occupies residues 287-316 (DPGLSDEEREALRDSARALRDSRADLTVGT). The segment covering 296–310 (EALRDSARALRDSRA) has biased composition (basic and acidic residues).

The protein belongs to the LDH/MDH superfamily. LDH family. Homotetramer.

Its subcellular location is the cytoplasm. The catalysed reaction is (S)-lactate + NAD(+) = pyruvate + NADH + H(+). It functions in the pathway fermentation; pyruvate fermentation to lactate; (S)-lactate from pyruvate: step 1/1. Allosterically activated by fructose 1,6-bisphosphate (FBP). Catalyzes the conversion of lactate to pyruvate. The sequence is that of L-lactate dehydrogenase from Salinibacter ruber (strain DSM 13855 / M31).